A 351-amino-acid chain; its full sequence is Protein arginine N-methyltransferase 1 (351 aa).

The SAM-dependent MTase PRMT-type domain maps to 30 to 331 (KDYYFDSYAH…KNNRDLDFTV (302 aa)). S-adenosyl-L-methionine is bound by residues H43, R52, G76, E98, and E127. Active-site residues include E142 and E151.

Belongs to the class I-like SAM-binding methyltransferase superfamily. Protein arginine N-methyltransferase family. In terms of assembly, homodimer. Homooctamer; individual homodimers associates to form a homooctamer and homooligomerization is required for proper localization to the cell membrane. Individual homodimers can associate to form a homohexamer. Component of a complex with lsm14a/rap55a. Interacts with cirbp.

Its subcellular location is the nucleus. It is found in the nucleoplasm. The protein resides in the cytoplasm. The protein localises to the cytosol. It catalyses the reaction L-arginyl-[protein] + 2 S-adenosyl-L-methionine = N(omega),N(omega)-dimethyl-L-arginyl-[protein] + 2 S-adenosyl-L-homocysteine + 2 H(+). It carries out the reaction L-arginyl-[protein] + S-adenosyl-L-methionine = N(omega)-methyl-L-arginyl-[protein] + S-adenosyl-L-homocysteine + H(+). The catalysed reaction is N(omega)-methyl-L-arginyl-[protein] + S-adenosyl-L-methionine = N(omega),N(omega)-dimethyl-L-arginyl-[protein] + S-adenosyl-L-homocysteine + H(+). In terms of biological role, arginine methyltransferase that methylates (mono and asymmetric dimethylation) the guanidino nitrogens of arginyl residues present in target proteins. Constitutes the main enzyme that mediates monomethylation and asymmetric dimethylation of histone H4 'Arg-3' (H4R3me1 and H4R3me2a, respectively), a specific tag for epigenetic transcriptional activation. Methylates ilf3 to regulate its DNA-binding activity. Required for neural induction, playing a key role in the control of epidermal versus neural cell fate choice. Methylates cirbp to regulate its subcellular location. Acts transiently during metamorphosis as a transcription coactivator, enhancing thyroid hormone (T3) receptor (TR)-mediated transcription by enhancing TR binding to the T3 response element (TRE), and histone modification through recruitment of other coactivators. The polypeptide is Protein arginine N-methyltransferase 1 (Xenopus tropicalis (Western clawed frog)).